Consider the following 221-residue polypeptide: Protein GrpE (221 aa).

Residues 1–83 (MEQEQKATQE…AKNCRTRSED (83 aa)) are disordered. The span at 23–32 (QEEKAEERGG) shows a compositional bias: basic and acidic residues. Over residues 41–53 (ENLQQENTQAQQE) the composition is skewed to low complexity.

It belongs to the GrpE family. As to quaternary structure, homodimer.

Its subcellular location is the cytoplasm. Functionally, participates actively in the response to hyperosmotic and heat shock by preventing the aggregation of stress-denatured proteins, in association with DnaK and GrpE. It is the nucleotide exchange factor for DnaK and may function as a thermosensor. Unfolded proteins bind initially to DnaJ; upon interaction with the DnaJ-bound protein, DnaK hydrolyzes its bound ATP, resulting in the formation of a stable complex. GrpE releases ADP from DnaK; ATP binding to DnaK triggers the release of the substrate protein, thus completing the reaction cycle. Several rounds of ATP-dependent interactions between DnaJ, DnaK and GrpE are required for fully efficient folding. In Geobacillus stearothermophilus (Bacillus stearothermophilus), this protein is Protein GrpE.